The primary structure comprises 251 residues: Hydroxyacylglutathione hydrolase (251 aa).

Residues His53, His55, Asp57, His58, His110, Asp127, and His165 each coordinate Zn(2+).

The protein belongs to the metallo-beta-lactamase superfamily. Glyoxalase II family. In terms of assembly, monomer. Zn(2+) is required as a cofactor.

It carries out the reaction an S-(2-hydroxyacyl)glutathione + H2O = a 2-hydroxy carboxylate + glutathione + H(+). The protein operates within secondary metabolite metabolism; methylglyoxal degradation; (R)-lactate from methylglyoxal: step 2/2. Functionally, thiolesterase that catalyzes the hydrolysis of S-D-lactoyl-glutathione to form glutathione and D-lactic acid. In Pectobacterium carotovorum subsp. carotovorum (strain PC1), this protein is Hydroxyacylglutathione hydrolase.